The chain runs to 397 residues: Acetate kinase (397 aa).

Asn8 contacts Mg(2+). Lys15 lines the ATP pocket. Residue Arg89 coordinates substrate. Residue Asp146 is the Proton donor/acceptor of the active site. Residues 206 to 210 (HVGNG), 283 to 285 (DMR), and 331 to 335 (GMGEN) contribute to the ATP site. Glu383 contributes to the Mg(2+) binding site.

The protein belongs to the acetokinase family. In terms of assembly, homodimer. Mg(2+) serves as cofactor. Requires Mn(2+) as cofactor.

It is found in the cytoplasm. It carries out the reaction acetate + ATP = acetyl phosphate + ADP. It participates in metabolic intermediate biosynthesis; acetyl-CoA biosynthesis; acetyl-CoA from acetate: step 1/2. Catalyzes the formation of acetyl phosphate from acetate and ATP. Can also catalyze the reverse reaction. The protein is Acetate kinase of Streptococcus agalactiae serotype Ia (strain ATCC 27591 / A909 / CDC SS700).